An 880-amino-acid chain; its full sequence is Alanine--tRNA ligase (880 aa).

Zn(2+) contacts are provided by His566, His570, Cys668, and His672.

It belongs to the class-II aminoacyl-tRNA synthetase family. Requires Zn(2+) as cofactor.

Its subcellular location is the cytoplasm. It catalyses the reaction tRNA(Ala) + L-alanine + ATP = L-alanyl-tRNA(Ala) + AMP + diphosphate. In terms of biological role, catalyzes the attachment of alanine to tRNA(Ala) in a two-step reaction: alanine is first activated by ATP to form Ala-AMP and then transferred to the acceptor end of tRNA(Ala). Also edits incorrectly charged Ser-tRNA(Ala) and Gly-tRNA(Ala) via its editing domain. The protein is Alanine--tRNA ligase of Trichormus variabilis (strain ATCC 29413 / PCC 7937) (Anabaena variabilis).